A 796-amino-acid chain; its full sequence is YY1-associated protein 1 (796 aa).

Disordered stretches follow at residues 1–45 and 463–488; these read MEEE…ATPS and IQPS…SEAP. Positions 23–36 are enriched in basic and acidic residues; that stretch reads PPDKREGSAVDPGK. The segment covering 463–472 has biased composition (low complexity); the sequence is IQPSPSLQPS. Over residues 473-485 the composition is skewed to polar residues; it reads FNPGKTPAQSTHS. At S724 the chain carries Phosphoserine. Positions 755–776 are disordered; the sequence is RQALEPLPQGIQESLNNSSPGD. A compositionally biased stretch (polar residues) spans 765–774; the sequence is IQESLNNSSP.

Interacts with YY1. Interacts with MAD2L2. Interacts with INO80. As to expression, ubiquitous. Detected in small intestine, skeletal muscle, lung, pancreas, brain, stomach, spleen, colon and heart. Detected at very low levels in healthy liver. Highly expressed in most liver carcinomas.

It localises to the cytoplasm. The protein resides in the nucleus. It is found in the nucleoplasm. The protein localises to the nucleolus. Functionally, associates with the INO80 chromatin remodeling complex, which is responsible for transcriptional regulation, DNA repair, and replication. Enhances transcription activation by YY1. Plays a role in cell cycle regulation. This Homo sapiens (Human) protein is YY1-associated protein 1.